A 193-amino-acid polypeptide reads, in one-letter code: Cysteine and glycine-rich protein 1 (193 aa).

The 52-residue stretch at 10–61 (CGVCQKTVYFAEEVQCEGSSFHKSCFLCLVCKKNLDSTTVAVHGEEIYCKSC) folds into the LIM zinc-binding 1 domain. The Nuclear localization signal signature appears at 64–69 (KKYGPK). Residue Ser81 is modified to Phosphoserine. An N6-acetyllysine mark is found at Lys84, Lys112, Lys131, Lys137, and Lys161. One can recognise an LIM zinc-binding 2 domain in the interval 119 to 170 (CPRCSQAVYAAEKVIGAGKSWHKSCFRCAKCGKGLESTTLADKDGEIYCKGC). Ser192 is modified (phosphoserine).

Interacts with ASCC1; ASCC2 and TRIP4.

The protein localises to the nucleus. In terms of biological role, could play a role in neuronal development. This chain is Cysteine and glycine-rich protein 1 (CSRP1), found in Bos taurus (Bovine).